Reading from the N-terminus, the 519-residue chain is Histidine--tRNA ligase, cytoplasmic (519 aa).

Residues 135–137 (DLT), arginine 162, glutamine 178, aspartate 182, arginine 331, and 335–336 (YY) contribute to the L-histidine site.

It belongs to the class-II aminoacyl-tRNA synthetase family. Homodimer.

The protein resides in the cytoplasm. The catalysed reaction is tRNA(His) + L-histidine + ATP = L-histidyl-tRNA(His) + AMP + diphosphate + H(+). Catalyzes the ATP-dependent ligation of histidine to the 3'-end of its cognate tRNA, via the formation of an aminoacyl-adenylate intermediate (His-AMP). Plays a role in axon guidance. The sequence is that of Histidine--tRNA ligase, cytoplasmic (hars1) from Takifugu rubripes (Japanese pufferfish).